A 419-amino-acid polypeptide reads, in one-letter code: eIF5-mimic protein 1 (419 aa).

The tract at residues 1–22 (MNKHQKPVLTGQRFKTRKRDEK) is disordered. Position 117 is an N6-acetyllysine (Lys-117). The W2 domain maps to 248–415 (VQQSLGTRKE…QNAEEESESE (168 aa)). 3 positions are modified to phosphoserine: Ser-412, Ser-414, and Ser-419.

The protein belongs to the BZW family. Interacts with EIF3E, EIF2S2 and EIF3C.

Its subcellular location is the cytoplasm. Translation initiation regulator which represses non-AUG initiated translation and repeat-associated non-AUG (RAN) initiated translation by acting as a competitive inhibitor of eukaryotic translation initiation factor 5 (EIF5) function. Increases the accuracy of translation initiation by impeding EIF5-dependent translation from non-AUG codons by competing with it for interaction with EIF2S2 within the 43S pre-initiation complex (PIC) in an EIF3C-binding dependent manner. The chain is eIF5-mimic protein 1 (Bzw2) from Mus musculus (Mouse).